Here is a 146-residue protein sequence, read N- to C-terminus: SecB-like chaperone SmegB (146 aa).

Belongs to the SecB-like family.

Functionally, chaperone component of an orphan antitoxin chaperone (AC) system; there is no toxin gene in close genomic proximity. When expressed in E.coli complements the cold-sensitive phenotype of a secB deletion, suggesting it may have a generic chaperone function. Does not however complement the toxin-neutralizing effect of its M.tuberculosis paralog Rv1957 (AC P95257) in E.coli, probably because the antitoxin genes are not from the same family. In Mycolicibacterium smegmatis (strain ATCC 700084 / mc(2)155) (Mycobacterium smegmatis), this protein is SecB-like chaperone SmegB.